Here is a 512-residue protein sequence, read N- to C-terminus: Glutathione-binding protein GsiB (512 aa).

A signal peptide spans 1 to 26; it reads MARAVHRSGLVALGIATALMASCAFA.

Belongs to the bacterial solute-binding protein 5 family. The complex is composed of two ATP-binding proteins (GsiA), two transmembrane proteins (GsiC and GsiD) and a solute-binding protein (GsiB).

It localises to the periplasm. In terms of biological role, part of the ABC transporter complex GsiABCD involved in glutathione import. Binds glutathione. The protein is Glutathione-binding protein GsiB of Escherichia coli O157:H7.